The primary structure comprises 96 residues: Protein RnfH (96 aa).

Belongs to the UPF0125 (RnfH) family.

In Escherichia coli O81 (strain ED1a), this protein is Protein RnfH.